We begin with the raw amino-acid sequence, 196 residues long: Small ribosomal subunit protein uS4c (196 aa).

A disordered region spans residues 17–38; sequence ALPGLTRKTPKSRSNLKKKFHS. The span at 24–38 shows a compositional bias: basic residues; that stretch reads KTPKSRSNLKKKFHS. One can recognise an S4 RNA-binding domain in the interval 89 to 169; the sequence is MRLDNILFRL…LPKHLTIDTL (81 aa).

This sequence belongs to the universal ribosomal protein uS4 family. In terms of assembly, part of the 30S ribosomal subunit. Contacts protein S5. The interaction surface between S4 and S5 is involved in control of translational fidelity.

Its subcellular location is the plastid. The protein resides in the chloroplast. Its function is as follows. One of the primary rRNA binding proteins, it binds directly to 16S rRNA where it nucleates assembly of the body of the 30S subunit. Functionally, with S5 and S12 plays an important role in translational accuracy. The polypeptide is Small ribosomal subunit protein uS4c (rps4) (Lygeum spartum).